A 408-amino-acid chain; its full sequence is UPF0761 membrane protein Avin_36810 (408 aa).

A run of 6 helical transmembrane segments spans residues 33–53 (YTALFAVVPIMTLIFVVLSVV), 92–112 (HLTWLGVGVLMVTALLMLMTV), 132–152 (FLLHWAILSLGPLLLGTGFAL), 174–194 (LLKVMPLLFSTAAFTLLYVAV), 209–229 (LFAAVLFEAAKGLFGLYVALF), and 238–258 (AFAAVPLFLLWMYLSWMIVLL).

The protein belongs to the UPF0761 family.

It is found in the cell inner membrane. The sequence is that of UPF0761 membrane protein Avin_36810 from Azotobacter vinelandii (strain DJ / ATCC BAA-1303).